The primary structure comprises 428 residues: Enolase (428 aa).

A (2R)-2-phosphoglycerate-binding site is contributed by Gln163. The active-site Proton donor is the Glu205. Mg(2+) contacts are provided by Asp242, Glu286, and Asp313. (2R)-2-phosphoglycerate-binding residues include Lys338, Arg367, Ser368, and Lys389. Lys338 (proton acceptor) is an active-site residue.

It belongs to the enolase family. The cofactor is Mg(2+).

The protein localises to the cytoplasm. It is found in the secreted. The protein resides in the cell surface. The catalysed reaction is (2R)-2-phosphoglycerate = phosphoenolpyruvate + H2O. The protein operates within carbohydrate degradation; glycolysis; pyruvate from D-glyceraldehyde 3-phosphate: step 4/5. In terms of biological role, catalyzes the reversible conversion of 2-phosphoglycerate (2-PG) into phosphoenolpyruvate (PEP). It is essential for the degradation of carbohydrates via glycolysis. This chain is Enolase, found in Bordetella petrii (strain ATCC BAA-461 / DSM 12804 / CCUG 43448).